Reading from the N-terminus, the 367-residue chain is Methylthioribose-1-phosphate isomerase (367 aa).

Residues 48 to 50, arginine 91, and glutamine 215 each bind substrate; that span reads RGA. Aspartate 256 (proton donor) is an active-site residue. Residue 266–267 participates in substrate binding; it reads NK.

The protein belongs to the eIF-2B alpha/beta/delta subunits family. MtnA subfamily.

It carries out the reaction 5-(methylsulfanyl)-alpha-D-ribose 1-phosphate = 5-(methylsulfanyl)-D-ribulose 1-phosphate. The protein operates within amino-acid biosynthesis; L-methionine biosynthesis via salvage pathway; L-methionine from S-methyl-5-thio-alpha-D-ribose 1-phosphate: step 1/6. Its function is as follows. Catalyzes the interconversion of methylthioribose-1-phosphate (MTR-1-P) into methylthioribulose-1-phosphate (MTRu-1-P). This chain is Methylthioribose-1-phosphate isomerase, found in Syntrophus aciditrophicus (strain SB).